Reading from the N-terminus, the 334-residue chain is Glycerol-1-phosphate dehydrogenase [NAD(P)+] (334 aa).

NAD(+)-binding positions include 77 to 81 and 99 to 102; these read GRPID and TTAS. D104 is a substrate binding site. S108 serves as a coordination point for NAD(+). D147 serves as a coordination point for substrate. Zn(2+) is bound by residues D147 and H225. H229 is a binding site for substrate. Zn(2+) is bound at residue H246.

It belongs to the glycerol-1-phosphate dehydrogenase family. Zn(2+) is required as a cofactor.

It localises to the cytoplasm. It catalyses the reaction sn-glycerol 1-phosphate + NAD(+) = dihydroxyacetone phosphate + NADH + H(+). The catalysed reaction is sn-glycerol 1-phosphate + NADP(+) = dihydroxyacetone phosphate + NADPH + H(+). It participates in membrane lipid metabolism; glycerophospholipid metabolism. Catalyzes the NAD(P)H-dependent reduction of dihydroxyacetonephosphate (DHAP or glycerone phosphate) to glycerol 1-phosphate (G1P). The G1P thus generated is used as the glycerophosphate backbone of phospholipids in the cellular membranes of Archaea. In Methanococcus maripaludis (strain C5 / ATCC BAA-1333), this protein is Glycerol-1-phosphate dehydrogenase [NAD(P)+].